The following is a 943-amino-acid chain: Protein translocase subunit SecA (943 aa).

ATP-binding positions include Gln-90, 108-112, and Asp-509; that span reads GEGKT. The disordered stretch occupies residues 535 to 564; the sequence is PDNEHKPPIPKQRNSKSKGGFSKKASSKLK.

Belongs to the SecA family. Monomer and homodimer. Part of the essential Sec protein translocation apparatus which comprises SecA, SecYEG and auxiliary proteins SecDF. Other proteins may also be involved.

The protein localises to the cell inner membrane. It localises to the cellular thylakoid membrane. Its subcellular location is the cytoplasm. It catalyses the reaction ATP + H2O + cellular proteinSide 1 = ADP + phosphate + cellular proteinSide 2.. Part of the Sec protein translocase complex. Interacts with the SecYEG preprotein conducting channel. Has a central role in coupling the hydrolysis of ATP to the transfer of proteins into and across the cell membrane, serving as an ATP-driven molecular motor driving the stepwise translocation of polypeptide chains across the membrane. In terms of biological role, probably participates in protein translocation into and across both the cytoplasmic and thylakoid membranes in cyanobacterial cells. In Prochlorococcus marinus (strain MIT 9215), this protein is Protein translocase subunit SecA.